The following is a 142-amino-acid chain: Transcriptional regulator MraZ (142 aa).

2 SpoVT-AbrB domains span residues 5-51 (ASAL…PRPE) and 77-120 (AMDV…DSQT).

The protein belongs to the MraZ family. Forms oligomers.

It localises to the cytoplasm. The protein localises to the nucleoid. This is Transcriptional regulator MraZ from Burkholderia cenocepacia (strain ATCC BAA-245 / DSM 16553 / LMG 16656 / NCTC 13227 / J2315 / CF5610) (Burkholderia cepacia (strain J2315)).